The following is a 56-amino-acid chain: Large ribosomal subunit protein bL32 (56 aa).

The segment at 1–37 (MAVQQNKKSRSRRDMRRSHDALTTAAISVDKASGEKH) is disordered. The segment covering 7-16 (KKSRSRRDMR) has biased composition (basic residues).

This sequence belongs to the bacterial ribosomal protein bL32 family.

The sequence is that of Large ribosomal subunit protein bL32 (rpmF) from Pasteurella multocida (strain Pm70).